Consider the following 133-residue polypeptide: MARKKEFRYRGYTLDELLNMSLEEFAKLLPARQRRSLKRGLSPEQKKLLRKIRLAKKGKYNKPIRTHSRDMIVLPEMVGITIHVHNGKEFVPIEIKPEMIGHYLGEFALTRKIVQHGSPGVGATRSSMFVAVK.

Belongs to the universal ribosomal protein uS19 family.

Protein S19 forms a complex with S13 that binds strongly to the 16S ribosomal RNA. In Thermococcus gammatolerans (strain DSM 15229 / JCM 11827 / EJ3), this protein is Small ribosomal subunit protein uS19.